A 124-amino-acid polypeptide reads, in one-letter code: Fluoride-specific ion channel FluC (124 aa).

A run of 4 helical transmembrane segments spans residues 4 to 24 (VLFV…ISLL), 35 to 55 (FGTL…FALG), 62 to 82 (PEIK…FSTF), and 95 to 115 (LVKA…VVYL). Na(+) is bound by residues G74 and T77.

Belongs to the fluoride channel Fluc/FEX (TC 1.A.43) family.

Its subcellular location is the cell inner membrane. It carries out the reaction fluoride(in) = fluoride(out). Na(+) is not transported, but it plays an essential structural role and its presence is essential for fluoride channel function. Functionally, fluoride-specific ion channel. Important for reducing fluoride concentration in the cell, thus reducing its toxicity. This Shewanella halifaxensis (strain HAW-EB4) protein is Fluoride-specific ion channel FluC.